A 417-amino-acid polypeptide reads, in one-letter code: Frizzy aggregation protein FrzCD (417 aa).

The span at 1 to 11 (MSLDTPNEKPA) shows a compositional bias: basic and acidic residues. The tract at residues 1-34 (MSLDTPNEKPAGKARARKAPASKAGATNAASTSS) is disordered. Positions 21 to 34 (ASKAGATNAASTSS) are enriched in low complexity. The Methyl-accepting transducer domain maps to 144–380 (AALRLSSSAN…QVVASMAEIE (237 aa)).

This sequence belongs to the methyl-accepting chemotaxis (MCP) protein family. Methylated. Saturated fatty acids capric acid and lauric acid stimulate methylation. Short-chain alcohols, such as isoamyl alcohol, and some other solvents cause demethylation.

Its subcellular location is the cytoplasm. Its function is as follows. Methyl-accepting taxis protein necessary for the proper aggregation of cells to form fruiting bodies. Frz genes define a system of signal transduction analogous to the enterobacterial chemotaxis systems. The chain is Frizzy aggregation protein FrzCD (frzCD) from Myxococcus xanthus.